We begin with the raw amino-acid sequence, 314 residues long: Serine/threonine-protein phosphatase PP2A-4 catalytic subunit (314 aa).

Residues Asp62, His64, Asp90, and Asn122 each contribute to the Mn(2+) site. His123 acts as the Proton donor in catalysis. Residues His172 and His246 each coordinate Mn(2+).

Belongs to the PPP phosphatase family. PP-2A subfamily. Requires Mn(2+) as cofactor.

The protein resides in the cytoplasm. It carries out the reaction O-phospho-L-seryl-[protein] + H2O = L-seryl-[protein] + phosphate. It catalyses the reaction O-phospho-L-threonyl-[protein] + H2O = L-threonyl-[protein] + phosphate. This chain is Serine/threonine-protein phosphatase PP2A-4 catalytic subunit (PP2A4), found in Oryza sativa subsp. japonica (Rice).